The sequence spans 652 residues: Vacuolar fusion protein MON1 homolog A (652 aa).

The segment at M102–A141 is disordered. 2 positions are modified to phosphoserine: S128 and S153. T158 is modified (phosphothreonine). The tract at residues T158 to R185 is disordered. S188 carries the phosphoserine modification. Residues P211 to T245 form a disordered region.

The protein belongs to the MON1/SAND family. As to quaternary structure, interacts with CCZ1. Found in a complex with RMC1, CCZ1, MON1A and MON1B. The MON1A-CCZ1B complex interacts with RIMOC1. The MON1A-CCZ1B complex interacts with RAB7A and this interaction is enhanced in the presence of RIMOC1.

Plays an important role in membrane trafficking through the secretory apparatus. Not involved in endocytic trafficking to lysosomes. Acts in concert with CCZ1, as a guanine exchange factor (GEF) for RAB7, promotes the exchange of GDP to GTP, converting it from an inactive GDP-bound form into an active GTP-bound form. The polypeptide is Vacuolar fusion protein MON1 homolog A (MON1A) (Homo sapiens (Human)).